Reading from the N-terminus, the 334-residue chain is GTPase Obg (334 aa).

In terms of domain architecture, Obg spans 1-159 (MRFVDEVVIK…KEVRLELNLL (159 aa)). In terms of domain architecture, OBG-type G spans 160 to 331 (ADVALLGLPN…LAKKLNEFLQ (172 aa)). GTP is bound by residues 166–173 (GLPNAGKS), 191–195 (FTTMY), 212–215 (DIPG), 282–285 (NKID), and 312–314 (SAA). The Mg(2+) site is built by serine 173 and threonine 193.

The protein belongs to the TRAFAC class OBG-HflX-like GTPase superfamily. OBG GTPase family. In terms of assembly, monomer. Requires Mg(2+) as cofactor.

Its subcellular location is the cytoplasm. Its function is as follows. An essential GTPase which binds GTP, GDP and possibly (p)ppGpp with moderate affinity, with high nucleotide exchange rates and a fairly low GTP hydrolysis rate. Plays a role in control of the cell cycle, stress response, ribosome biogenesis and in those bacteria that undergo differentiation, in morphogenesis control. This is GTPase Obg from Francisella tularensis subsp. holarctica (strain FTNF002-00 / FTA).